Reading from the N-terminus, the 151-residue chain is Protein NrdI (151 aa).

Belongs to the NrdI family.

Probably involved in ribonucleotide reductase function. The polypeptide is Protein NrdI (Mycoplasmopsis pulmonis (strain UAB CTIP) (Mycoplasma pulmonis)).